We begin with the raw amino-acid sequence, 390 residues long: Acetate kinase (390 aa).

A Mg(2+)-binding site is contributed by Asn-10. Lys-17 provides a ligand contact to ATP. Arg-89 lines the substrate pocket. Catalysis depends on Asp-146, which acts as the Proton donor/acceptor. ATP-binding positions include His-204–Gly-208, Asp-278–Arg-280, and Gly-323–Asn-327. Glu-376 is a binding site for Mg(2+).

Belongs to the acetokinase family. Homodimer. The cofactor is Mg(2+). Requires Mn(2+) as cofactor.

It is found in the cytoplasm. It catalyses the reaction acetate + ATP = acetyl phosphate + ADP. It functions in the pathway metabolic intermediate biosynthesis; acetyl-CoA biosynthesis; acetyl-CoA from acetate: step 1/2. In terms of biological role, catalyzes the formation of acetyl phosphate from acetate and ATP. Can also catalyze the reverse reaction. In Mycoplasma pneumoniae (strain ATCC 29342 / M129 / Subtype 1) (Mycoplasmoides pneumoniae), this protein is Acetate kinase.